Consider the following 916-residue polypeptide: MFAPLLKKLFGSKNERDVKRMAKAVQAINALEPQMVALSDEQLKAKTAEFQQRYAKGETLDQLLPEAFAVVREAGKRVMGMRHFDVQLIGGMTLHDGKIAEMRTGEGKTLVGTLPVYLNALSGKGVHVVTVNDYLARRDANWMRPLYEFLGLSVGVVTPFQPPEDKRAAYAADITYGTNNEFGFDYLRDNMAFSLDDKFQRELNFAVVDEVDSILIDEARTPLIISGQAEDSSELYIKINKLIPRLKRQVEEVEGKPTEEGHYSIDEKTRQVELNEQGHQFIEDLLSQNGLLGEGESLYSAHNLSLLTHVYAALRAHTLFHRNVEYIVQGDQILLIDEHTGRTMPGRRLSEGLHQAIEAKEGLPIQAESQTLASTTFQNYFRLYNKLAGMTGTADTEAFEFRQIYGLDVVVIPTHRPIARKDFNDLVYLTQEEKYAAIITDIKQCQALGRPILVGTASIESSEYVSKLLQEAGIEHKVLNAKYHEKEAEIIAQAGAPGSVTIATNMAGRGTDILLGGNWEVEVAALENPTEEQIAQIKAEWQKRHQQVIEAGGLHVIASERHESRRIDNQLRGRAGRQGDPGSSRFYLSLEDNLMRIFASDRVKNFMKALGMQSGEAIEHRMVTNAIEKAQRKVEGRNFDIRKQLLEFDDVANEQRKVIYHMRNTLLSAEDVGETIKEFREETLSATINQHIPPQSLPEQWDIEGLEAALYSDFAVRLPIQQWLDEDDKLYEETLRSKILEQIVAAYYEKEELAGAEALRAFEKQMLLRVLDDLWKDHLSTMDHLRHGIHLRGYAQKNPKQEYKRESFTLFQELLDSIKRDTIRVLSHVQVRREDPAEEEARLRREAEELAKRMQFQHAEAPSMEQAVAGEEEELPEGPAPVVPLEPVRNEQKIGRNEPCPCGSGKKYKHCHGQLD.

ATP-binding positions include Q87, G105–T109, and D512. The interval Q857–D916 is disordered. Residues C900, C902, C911, and H912 each coordinate Zn(2+). The span at K906 to D916 shows a compositional bias: basic residues.

This sequence belongs to the SecA family. As to quaternary structure, monomer and homodimer. Part of the essential Sec protein translocation apparatus which comprises SecA, SecYEG and auxiliary proteins SecDF-YajC and YidC. Zn(2+) is required as a cofactor.

The protein resides in the cell inner membrane. It is found in the cytoplasm. The enzyme catalyses ATP + H2O + cellular proteinSide 1 = ADP + phosphate + cellular proteinSide 2.. Its function is as follows. Part of the Sec protein translocase complex. Interacts with the SecYEG preprotein conducting channel. Has a central role in coupling the hydrolysis of ATP to the transfer of proteins into and across the cell membrane, serving both as a receptor for the preprotein-SecB complex and as an ATP-driven molecular motor driving the stepwise translocation of polypeptide chains across the membrane. The chain is Protein translocase subunit SecA from Pseudomonas aeruginosa (strain LESB58).